The following is a 198-amino-acid chain: RxLR effector protein Htp1 (198 aa).

A signal peptide spans 1–23 (MRIHHPLTLAALCVVLHESLGAA). Residues 46-49 (RHLR) carry the RxLR motif. Disordered stretches follow at residues 48–101 (LRSD…TPMK) and 115–198 (TKNA…PTFD). Asparagine 70 carries an N-linked (GlcNAc...) asparagine glycan. Over residues 70–91 (NNSQEQATTGNSVETNQVPSTE) the composition is skewed to polar residues. Acidic residues predominate over residues 126-137 (DDDDSDFSDDDV). A compositionally biased stretch (low complexity) spans 173 to 191 (APTNAPTGTDAPTDAPTDA).

This sequence belongs to the RxLR effector family. Interacts with the effector Htp3 within the host cells.

The protein resides in the secreted. It localises to the host cell. Effector involved in the disease saprolegniosis in salmonids and other freshwater fish, resulting in considerable economic losses in aquaculture. Within the host fish cells, Htp1 is involved in the uptake of the S.parasitica effector Htp3 at a neutral pH (pH 7.5) and its release from vesicles into host cytosol where it degrades nucleic acids. The sequence is that of RxLR effector protein Htp1 from Saprolegnia parasitica (strain CBS 223.65).